The chain runs to 460 residues: Probable fibrosin-1 (460 aa).

A Glycyl lysine isopeptide (Lys-Gly) (interchain with G-Cter in SUMO2) cross-link involves residue Lys8. Disordered stretches follow at residues Ser40–Pro79, Phe205–Ala311, and Tyr406–Arg460. Over residues Gly212–Pro223 the composition is skewed to pro residues. 2 positions are modified to asymmetric dimethylarginine: Arg229 and Arg239. Residues Gly248–Pro272 show a composition bias toward basic and acidic residues. Ser281 bears the Phosphoserine mark. The span at Arg288–Ala311 shows a compositional bias: basic and acidic residues. Positions Ala436–Pro453 are enriched in pro residues.

The protein is Probable fibrosin-1 (FBRS) of Homo sapiens (Human).